A 690-amino-acid polypeptide reads, in one-letter code: F-box/LRR-repeat protein 5 (690 aa).

The hemerythrin-like stretch occupies residues 1-159 (MAPFPDEVDV…IKKKVIAQHC (159 aa)). Residues H15, H57, E58, E61, H80, H126, and E130 each contribute to the Fe(3+) site. Positions 202–248 (STGITHLPPEVMLSIFSYLNPQELCRCSQVSTKWSQLAKTGSLWKHL) constitute an F-box domain. 7 LRR repeats span residues 340-364 (SSAVSSKMVRQILELCPNLEHLDLT), 365-392 (QTDISDSAFDSWSWLGCCQSLRHLDLSG), 393-418 (CEKITDMALEKISRALGVLTSHQSGF), 478-507 (VWMLDAEDLADIEDAVEWRHRNVESLCVME), 575-606 (TTLPRGKDLIYFGSEKSDQETGRVLLFLSLSG), 607-634 (CYQITDHGLRALTLGGGLPYLEHLNLSG), and 635-660 (CLTVTGAGLQDLVSACPSLNDEYFYY). 4 residues coordinate [2Fe-2S] cluster: C661, C675, C685, and C686.

In terms of assembly, part of a SCF (SKP1-cullin-F-box) protein ligase complex. Interacts with ACO1/IRP1, IREB2/IRP2; the interaction depends on the [2Fe-2S] cluster. Interacts with DCTN1/p150-glued. It depends on [2Fe-2S] cluster as a cofactor. Polybiquitinated upon iron and oxygen depletion, leading to its degradation by the proteasome. Ubiquitination is regulated by the hemerythrin-like region that acts as an oxygen and iron sensor. Undergoes constitutive ubiquitin-dependent degradation at the steady state by HERC2. As to expression, ubiquitously expressed. Highly expressed in early embryogenesis with expression decreasing as the embryo progresses through development (E11 and E15).

It is found in the cytoplasm. The protein resides in the perinuclear region. Its subcellular location is the nucleus. Its pathway is protein modification; protein ubiquitination. Its activity is regulated as follows. An iron-sulfur cluster promotes IRP2 polyubiquitination and degradation in response to both iron and oxygen concentrations. In terms of biological role, component of some SCF (SKP1-cullin-F-box) protein ligase complex that plays a central role in iron homeostasis by promoting the ubiquitination and subsequent degradation of IREB2/IRP2. The C-terminal domain of FBXL5 contains a redox-sensitive [2Fe-2S] cluster that, upon oxidation, promotes binding to IRP2 to effect its oxygen-dependent degradation. Under iron deficiency conditions, the N-terminal hemerythrin-like (Hr) region, which contains a diiron metal center, cannot bind iron and undergoes conformational changes that destabilize the FBXL5 protein and cause its ubiquitination and degradation. When intracellular iron levels start rising, the Hr region is stabilized. Additional increases in iron levels facilitate the assembly and incorporation of a redox active [2Fe-2S] cluster in the C-terminal domain. Only when oxygen level is high enough to maintain the cluster in its oxidized state can FBXL5 recruit IRP2 as a substrate for polyubiquination and degradation. Promotes ubiquitination and subsequent degradation of the dynactin complex component DCTN1. Within the nucleus, promotes the ubiquitination of SNAI1; preventing its interaction with DNA and promoting its degradation. Negatively regulates DNA damage response by mediating the ubiquitin-proteasome degradation of the DNA repair protein NABP2. This is F-box/LRR-repeat protein 5 (Fbxl5) from Mus musculus (Mouse).